A 153-amino-acid chain; its full sequence is 6,7-dimethyl-8-ribityllumazine synthase (153 aa).

5-amino-6-(D-ribitylamino)uracil contacts are provided by residues phenylalanine 22, 56–58 (AFE), and 80–82 (TVI). Residue 85–86 (ST) coordinates (2S)-2-hydroxy-3-oxobutyl phosphate. The active-site Proton donor is histidine 88. 5-amino-6-(D-ribitylamino)uracil is bound at residue phenylalanine 113. Arginine 127 is a (2S)-2-hydroxy-3-oxobutyl phosphate binding site.

It belongs to the DMRL synthase family. In terms of assembly, forms an icosahedral capsid composed of 60 subunits, arranged as a dodecamer of pentamers.

The enzyme catalyses (2S)-2-hydroxy-3-oxobutyl phosphate + 5-amino-6-(D-ribitylamino)uracil = 6,7-dimethyl-8-(1-D-ribityl)lumazine + phosphate + 2 H2O + H(+). Its pathway is cofactor biosynthesis; riboflavin biosynthesis; riboflavin from 2-hydroxy-3-oxobutyl phosphate and 5-amino-6-(D-ribitylamino)uracil: step 1/2. Catalyzes the formation of 6,7-dimethyl-8-ribityllumazine by condensation of 5-amino-6-(D-ribitylamino)uracil with 3,4-dihydroxy-2-butanone 4-phosphate. This is the penultimate step in the biosynthesis of riboflavin. This is 6,7-dimethyl-8-ribityllumazine synthase from Actinobacillus pleuropneumoniae (Haemophilus pleuropneumoniae).